An 88-amino-acid chain; its full sequence is Beta-insect excitatory toxin 1 (88 aa).

A signal peptide spans 1–18; it reads MKFLLLFLVVLPIMGVFG. Residues 20–83 form the LCN-type CS-alpha/beta domain; the sequence is KNGYAVDSSG…ISDTRKSYCD (64 aa). 4 cysteine pairs are disulfide-bonded: Cys34-Cys55, Cys40-Cys60, Cys44-Cys62, and Cys56-Cys82.

It belongs to the long (4 C-C) scorpion toxin superfamily. Sodium channel inhibitor family. Beta subfamily. Expressed by the venom gland.

It is found in the secreted. Its function is as follows. Excitatory insect beta-toxins induce a spastic paralysis. They bind voltage-independently at site-4 of sodium channels (Nav) and shift the voltage of activation toward more negative potentials thereby affecting sodium channel activation and promoting spontaneous and repetitive firing. This toxin is active only on insects. The polypeptide is Beta-insect excitatory toxin 1 (Androctonus australis (Sahara scorpion)).